A 358-amino-acid chain; its full sequence is Carbamoyl phosphate synthase small chain (358 aa).

The tract at residues 1–172 (MKAALALEDG…EAKRFESDGD (172 aa)) is CPSase. Ser-45, Gly-222, and Gly-224 together coordinate L-glutamine. The 185-residue stretch at 174–358 (EVVLVDCGVK…RYVDMLREYR (185 aa)) folds into the Glutamine amidotransferase type-1 domain. Catalysis depends on Cys-249, which acts as the Nucleophile. Leu-250, Gln-253, Asn-291, and Phe-294 together coordinate L-glutamine. Active-site residues include His-333 and Glu-335.

This sequence belongs to the CarA family. In terms of assembly, composed of two chains; the small (or glutamine) chain promotes the hydrolysis of glutamine to ammonia, which is used by the large (or ammonia) chain to synthesize carbamoyl phosphate. Tetramer of heterodimers (alpha,beta)4.

The enzyme catalyses hydrogencarbonate + L-glutamine + 2 ATP + H2O = carbamoyl phosphate + L-glutamate + 2 ADP + phosphate + 2 H(+). The catalysed reaction is L-glutamine + H2O = L-glutamate + NH4(+). The protein operates within amino-acid biosynthesis; L-arginine biosynthesis; carbamoyl phosphate from bicarbonate: step 1/1. It functions in the pathway pyrimidine metabolism; UMP biosynthesis via de novo pathway; (S)-dihydroorotate from bicarbonate: step 1/3. In terms of biological role, small subunit of the glutamine-dependent carbamoyl phosphate synthetase (CPSase). CPSase catalyzes the formation of carbamoyl phosphate from the ammonia moiety of glutamine, carbonate, and phosphate donated by ATP, constituting the first step of 2 biosynthetic pathways, one leading to arginine and/or urea and the other to pyrimidine nucleotides. The small subunit (glutamine amidotransferase) binds and cleaves glutamine to supply the large subunit with the substrate ammonia. The polypeptide is Carbamoyl phosphate synthase small chain (Archaeoglobus fulgidus (strain ATCC 49558 / DSM 4304 / JCM 9628 / NBRC 100126 / VC-16)).